Here is a 344-residue protein sequence, read N- to C-terminus: L-rhamnose-proton symporter (344 aa).

A run of 10 helical transmembrane segments spans residues 4 to 24 (AITM…CFYA), 38 to 58 (WSVG…ALLL), 68 to 88 (FSLS…IGNI), 101 to 121 (MGIG…TPII), 137 to 157 (TLLG…AGQL), 175 to 195 (LVLA…MNAA), 214 to 234 (LPSY…FCFI), 259 to 279 (VLLS…YAWG), 290 to 310 (ISWM…GLVL), and 323 to 343 (VLSL…MGMA).

This sequence belongs to the L-rhamnose transporter (TC 2.A.7.6) family.

Its subcellular location is the cell inner membrane. It catalyses the reaction L-rhamnopyranose(in) + H(+)(in) = L-rhamnopyranose(out) + H(+)(out). Uptake of L-rhamnose across the cytoplasmic membrane with the concomitant transport of protons into the cell (symport system). The chain is L-rhamnose-proton symporter from Escherichia coli O157:H7.